The following is a 33-amino-acid chain: MSLEVILQLGSILLVVAAGPLVIVLLSVNEGNL.

A helical membrane pass occupies residues 5–25 (VILQLGSILLVVAAGPLVIVL).

The protein belongs to the Psb30/Ycf12 family. As to quaternary structure, PSII is composed of 1 copy each of membrane proteins PsbA, PsbB, PsbC, PsbD, PsbE, PsbF, PsbH, PsbI, PsbJ, PsbK, PsbL, PsbM, PsbT, PsbX, PsbY, PsbZ, Psb30/Ycf12, peripheral proteins of the oxygen-evolving complex and a large number of cofactors. It forms dimeric complexes.

The protein resides in the plastid. Its subcellular location is the chloroplast thylakoid membrane. In terms of biological role, a core subunit of photosystem II (PSII), probably helps stabilize the reaction center. This is Photosystem II reaction center protein Psb30 from Oltmannsiellopsis viridis (Marine flagellate).